Consider the following 72-residue polypeptide: Translation initiation factor IF-1 (72 aa).

The S1-like domain maps to methionine 1–lysine 72.

The protein belongs to the IF-1 family. In terms of assembly, component of the 30S ribosomal translation pre-initiation complex which assembles on the 30S ribosome in the order IF-2 and IF-3, IF-1 and N-formylmethionyl-tRNA(fMet); mRNA recruitment can occur at any time during PIC assembly.

It localises to the cytoplasm. In terms of biological role, one of the essential components for the initiation of protein synthesis. Stabilizes the binding of IF-2 and IF-3 on the 30S subunit to which N-formylmethionyl-tRNA(fMet) subsequently binds. Helps modulate mRNA selection, yielding the 30S pre-initiation complex (PIC). Upon addition of the 50S ribosomal subunit IF-1, IF-2 and IF-3 are released leaving the mature 70S translation initiation complex. This is Translation initiation factor IF-1 from Clostridium perfringens (strain 13 / Type A).